The sequence spans 89 residues: Small ribosomal subunit protein uS15 (89 aa).

The protein belongs to the universal ribosomal protein uS15 family. Part of the 30S ribosomal subunit. Forms a bridge to the 50S subunit in the 70S ribosome, contacting the 23S rRNA.

Functionally, one of the primary rRNA binding proteins, it binds directly to 16S rRNA where it helps nucleate assembly of the platform of the 30S subunit by binding and bridging several RNA helices of the 16S rRNA. In terms of biological role, forms an intersubunit bridge (bridge B4) with the 23S rRNA of the 50S subunit in the ribosome. The polypeptide is Small ribosomal subunit protein uS15 (Rhizorhabdus wittichii (strain DSM 6014 / CCUG 31198 / JCM 15750 / NBRC 105917 / EY 4224 / RW1) (Sphingomonas wittichii)).